The sequence spans 206 residues: MRPLTPRQAEILELIKRNIAETGMPPTRAEIATRLGFKSANAAEEHLKALAKKGCIEIMPGTSRGIRLPVEEEDNSESGLPLIGQVAAGEPILAQEHVEQYYQVDPSMFHPAADFLLRVRGDSMKNIGILEGDLLAVHKVQQARNGQVVVARVDDDVTVKRFEKKGNLVYLHAENEDYSPIKVDLSFQSLTIEGLAVGVIRNGDWL.

A DNA-binding region (H-T-H motif) is located at residues 28–48; sequence RAEIATRLGFKSANAAEEHLK. Active-site for autocatalytic cleavage activity residues include S123 and K160.

Belongs to the peptidase S24 family. Homodimer.

The enzyme catalyses Hydrolysis of Ala-|-Gly bond in repressor LexA.. Its function is as follows. Represses a number of genes involved in the response to DNA damage (SOS response), including recA and lexA. In the presence of single-stranded DNA, RecA interacts with LexA causing an autocatalytic cleavage which disrupts the DNA-binding part of LexA, leading to derepression of the SOS regulon and eventually DNA repair. The sequence is that of LexA repressor from Shewanella sp. (strain MR-4).